A 683-amino-acid polypeptide reads, in one-letter code: Cytoskeleton-associated protein 2 (683 aa).

Disordered stretches follow at residues 1-28 (MSTP…QRRQ) and 153-175 (NSKK…KKPV). Phosphoserine is present on residues S178 and S190. Disordered regions lie at residues 214–236 (KATK…SSNM) and 336–403 (EKSE…EKPV). Polar residues predominate over residues 219–236 (QPVNTSSVTVKSNRSSNM). Composition is skewed to basic and acidic residues over residues 336 to 345 (EKSEPVDQRR) and 362 to 376 (ETSE…EWKA). At S534 the chain carries Phosphoserine. Phosphothreonine occurs at positions 579 and 582. Phosphoserine is present on S595. Residues T596 and T597 each carry the phosphothreonine modification. Y599 carries the post-translational modification Phosphotyrosine. S602 bears the Phosphoserine mark.

It belongs to the CKAP2 family. Associates with alpha- and beta-tubulins. Abundant in testis, thymus, and in tumor derived cell lines, while barely detectable in liver, prostate, and kidney.

It is found in the cytoplasm. Its subcellular location is the cytoskeleton. The protein resides in the spindle. The protein localises to the spindle pole. Its function is as follows. Possesses microtubule stabilizing properties. Involved in regulating aneuploidy, cell cycling, and cell death in a p53/TP53-dependent manner. The protein is Cytoskeleton-associated protein 2 of Homo sapiens (Human).